The primary structure comprises 134 residues: Loki profilin-2 (134 aa).

The tract at residues 55–62 is loki loop; sequence LALGEKGI.

This sequence belongs to the Asgard profilin family.

The protein resides in the cytoplasm. It is found in the cytoskeleton. Inhibition of rabbit actin polymerization is reduced by phosphatidylinositol-(4,5)-P2(1,2-dipalmitoyl), a soluble form of the phospholipid phosphatidylinositol, suggesting an unknown lipid might regulate actin-profilin interaction in vivo. Binds to actin and affects the structure of the cytoskeleton. At high concentrations inhibits spontaneous rabbit actin nucleation. This strongly suggests this archaea has a profilin-regulated actin system, and actin-type genes can be identified in this organism. In Lokiarchaeum sp. (strain GC14_75), this protein is Loki profilin-2.